Consider the following 261-residue polypeptide: Small ribosomal subunit protein mS23 (261 aa).

Residues 234–261 are disordered; it reads NPSESWATDEKDPKKNDDIEEDVEEIKL. The segment covering 241-250 has biased composition (basic and acidic residues); that stretch reads TDEKDPKKND. Positions 251–261 are enriched in acidic residues; it reads DIEEDVEEIKL.

The protein belongs to the mitochondrion-specific ribosomal protein mS23 family. As to quaternary structure, component of the mitochondrial small ribosomal subunit.

It is found in the mitochondrion. The sequence is that of Small ribosomal subunit protein mS23 (RSM25) from Vanderwaltozyma polyspora (strain ATCC 22028 / DSM 70294 / BCRC 21397 / CBS 2163 / NBRC 10782 / NRRL Y-8283 / UCD 57-17) (Kluyveromyces polysporus).